A 56-amino-acid chain; its full sequence is Ovomucoid (56 aa).

Residues 6-56 (VDCSDHPKPACLQEQKPICGSDNKTYDNKCSFCNAVVDSNGTLTLSHFGKC) form the Kazal-like domain. 3 disulfide bridges follow: cysteine 8-cysteine 38, cysteine 16-cysteine 35, and cysteine 24-cysteine 56. Residue asparagine 45 is glycosylated (N-linked (GlcNAc...) asparagine).

It is found in the secreted. The polypeptide is Ovomucoid (Ortalis vetula (Plain chachalaca)).